Consider the following 318-residue polypeptide: Methionyl-tRNA formyltransferase (318 aa).

(6S)-5,6,7,8-tetrahydrofolate is bound at residue 112–115; that stretch reads SILP.

This sequence belongs to the Fmt family.

The catalysed reaction is L-methionyl-tRNA(fMet) + (6R)-10-formyltetrahydrofolate = N-formyl-L-methionyl-tRNA(fMet) + (6S)-5,6,7,8-tetrahydrofolate + H(+). In terms of biological role, attaches a formyl group to the free amino group of methionyl-tRNA(fMet). The formyl group appears to play a dual role in the initiator identity of N-formylmethionyl-tRNA by promoting its recognition by IF2 and preventing the misappropriation of this tRNA by the elongation apparatus. This is Methionyl-tRNA formyltransferase from Shewanella sp. (strain ANA-3).